A 438-amino-acid polypeptide reads, in one-letter code: Aspartate--tRNA(Asp/Asn) ligase (438 aa).

Residue E176 participates in L-aspartate binding. Residues 198 to 201 form an aspartate region; sequence QLYK. Position 220 (R220) interacts with L-aspartate. Residues 220–222, 228–230, and E361 each bind ATP; these read RAE and RHL. Residues E361 and S364 each coordinate Mg(2+). Residues S364 and R368 each contribute to the L-aspartate site. Residue 409-412 participates in ATP binding; sequence GADR.

This sequence belongs to the class-II aminoacyl-tRNA synthetase family. Type 2 subfamily. In terms of assembly, homodimer. Mg(2+) serves as cofactor.

Its subcellular location is the cytoplasm. It carries out the reaction tRNA(Asx) + L-aspartate + ATP = L-aspartyl-tRNA(Asx) + AMP + diphosphate. In terms of biological role, aspartyl-tRNA synthetase with relaxed tRNA specificity since it is able to aspartylate not only its cognate tRNA(Asp) but also tRNA(Asn). Reaction proceeds in two steps: L-aspartate is first activated by ATP to form Asp-AMP and then transferred to the acceptor end of tRNA(Asp/Asn). This chain is Aspartate--tRNA(Asp/Asn) ligase, found in Methanocaldococcus jannaschii (strain ATCC 43067 / DSM 2661 / JAL-1 / JCM 10045 / NBRC 100440) (Methanococcus jannaschii).